The sequence spans 406 residues: Putative F-box protein At5g38270 (406 aa).

Residues 20 to 67 (HDWSKLCPDILRSILESLSSTDFHRAKTVCSDWYSNWKTCVKPLCPWR) enclose the F-box domain.

This chain is Putative F-box protein At5g38270, found in Arabidopsis thaliana (Mouse-ear cress).